Here is a 101-residue protein sequence, read N- to C-terminus: Large ribosomal subunit protein bL21 (101 aa).

It belongs to the bacterial ribosomal protein bL21 family. Part of the 50S ribosomal subunit. Contacts protein L20.

In terms of biological role, this protein binds to 23S rRNA in the presence of protein L20. This chain is Large ribosomal subunit protein bL21, found in Magnetococcus marinus (strain ATCC BAA-1437 / JCM 17883 / MC-1).